A 350-amino-acid polypeptide reads, in one-letter code: Small ribosomal subunit biogenesis GTPase RsgA (350 aa).

Residues 1–17 (MSKNKLSKGQQRRVNAN) are compositionally biased toward polar residues. Residues 1-33 (MSKNKLSKGQQRRVNANHQRRLKTSKEKPDYDD) form a disordered region. The CP-type G domain occupies 104-273 (TSVLTRPDFY…VIDSPGVREF (170 aa)). Residues 160–163 (NKID) and 214–222 (GQSGVGKSS) each bind GTP. Zn(2+) is bound by residues C297, C302, H304, and C310.

The protein belongs to the TRAFAC class YlqF/YawG GTPase family. RsgA subfamily. As to quaternary structure, monomer. Associates with 30S ribosomal subunit, binds 16S rRNA. It depends on Zn(2+) as a cofactor.

Its subcellular location is the cytoplasm. One of several proteins that assist in the late maturation steps of the functional core of the 30S ribosomal subunit. Helps release RbfA from mature subunits. May play a role in the assembly of ribosomal proteins into the subunit. Circularly permuted GTPase that catalyzes slow GTP hydrolysis, GTPase activity is stimulated by the 30S ribosomal subunit. This is Small ribosomal subunit biogenesis GTPase RsgA from Escherichia coli (strain SMS-3-5 / SECEC).